A 464-amino-acid polypeptide reads, in one-letter code: Glutathione reductase (464 aa).

FAD-binding residues include Ser17 and Gly18. Ser17 serves as a coordination point for glutathione. Residue Arg24 participates in glutathione binding. 4 residues coordinate FAD: Glu37, Thr45, Cys46, and Lys54. Cys46 and Cys51 form a disulfide bridge. Residue Tyr103 participates in glutathione binding. Residue Ala119 participates in FAD binding. NADP(+) is bound by residues Ala186, Ile189, Glu192, Arg209, Arg215, and Gly274. Asp315 contributes to the FAD binding site. Glu321 contacts NADP(+). Thr323 contacts FAD. Arg331 serves as a coordination point for glutathione. Val354 lines the NADP(+) pocket. His453 provides a ligand contact to FAD. His453 serves as the catalytic Proton acceptor.

This sequence belongs to the class-I pyridine nucleotide-disulfide oxidoreductase family. In terms of assembly, homodimer. FAD serves as cofactor.

It localises to the cytoplasm. It is found in the mitochondrion. The enzyme catalyses 2 glutathione + NADP(+) = glutathione disulfide + NADPH + H(+). Functionally, catalyzes the reduction of glutathione disulfide (GSSG) to reduced glutathione (GSH). Constitutes the major mechanism to maintain a high GSH:GSSG ratio in the cytosol. The polypeptide is Glutathione reductase (pgr1) (Schizosaccharomyces pombe (strain 972 / ATCC 24843) (Fission yeast)).